We begin with the raw amino-acid sequence, 748 residues long: Transducin-like enhancer protein 4 (748 aa).

Disordered stretches follow at residues 1–20 (MIRD…PHQP) and 157–332 (LPIK…DPLA). The q domain stretch occupies residues 1–112 (MIRDLSKMYR…SQEQQQLQAQ (112 aa)). The GP domain stretch occupies residues 113-179 (HLLTWTWSAC…HQRDRDSIKS (67 aa)). Basic and acidic residues predominate over residues 158–177 (PIKDEKKHHDNDHQRDRDSI). Residues 178 to 189 (KSSSVSPSASFR) show a composition bias toward low complexity. Residues 180–249 (SSVSPSASFR…SPRGSPAHSP (70 aa)) are ccN domain. 4 positions are modified to phosphoserine: S183, S187, S191, and S197. Residues 190 to 227 (GSEKHRNSTDYSSESKKQKTEEKEIAARYDSDGEKSDD) show a composition bias toward basic and acidic residues. K212 carries the post-translational modification N6-acetyllysine. Phosphoserine is present on S220. S225 is modified (phosphoserine; by CK2). S240 is subject to Phosphoserine; by CDK1. 2 positions are modified to phosphoserine: S244 and S248. Basic and acidic residues predominate over residues 248-264 (SPRENGLDKTRLLKKDA). Residues 250-427 (RENGLDKTRL…PGGKPAYSFH (178 aa)) are SP domain. The residue at position 256 (K256) is an N6-acetyllysine. Residues 265 to 280 (PISPASVASSSSTPSS) are compositionally biased toward low complexity. The residue at position 267 (S267) is a Phosphoserine. Residues 292 to 303 (TTPVSKSNTPTP) are compositionally biased toward polar residues. A Phosphothreonine modification is found at T293. Phosphoserine is present on residues S296 and S298. Residues T300, T302, T309, and T315 each carry the phosphothreonine modification. The residue at position 394 (S394) is a Phosphoserine. WD repeat units lie at residues 460-498 (NHGE…NKSP), 506-545 (NRDN…PRIK), 550-589 (SSAP…LVRQ), 592-631 (GHTD…QLQQ), 633-672 (DFTS…KYQL), 674-713 (LHES…SIFQ), and 715-748 (KESS…EVIY).

It belongs to the WD repeat Groucho/TLE family. As to quaternary structure, homooligomer and heterooligomer with other family members. Binds PAX5, LEF1, TCF7, TCF7L1 and TCF7L2. Interacts with ZNF703; TLE4 may mediate ZNF703 transcriptional repression. Interacts with SIX3 and SIX6. Interacts with PAX2. In terms of processing, phosphorylated. PAX5 binding increases phosphorylation. Ubiquitinated by XIAP/BIRC4.

The protein localises to the nucleus. In terms of biological role, transcriptional corepressor that binds to a number of transcription factors. Inhibits the transcriptional activation mediated by PAX5, and by CTNNB1 and TCF family members in Wnt signaling. The effects of full-length TLE family members may be modulated by association with dominant-negative AES. Essential for the transcriptional repressor activity of SIX3 during retina and lens development and for SIX3 transcriptional auto-repression. Involved in transcriptional repression of GNRHR and enhances MSX1-mediated transcriptional repression of CGA/alpha-GSU. This chain is Transducin-like enhancer protein 4 (Tle4), found in Rattus norvegicus (Rat).